Here is a 358-residue protein sequence, read N- to C-terminus: MEDIVHKYKVSVIICFFNSAETLDAMIKDAVNQTLKDKEIILIDDGSYDGSLEIAEKYANKYSFIKIFSQKNMGLSASRDKGLSEAQGEYVIYWDGDDSVESTMLEVLYNRAKADNSDIVCSQFYIYFLAINVKRKSLLPFPNYPLTGKEAFKNLLFTVYATFGRKNFVVGTLWDKLIRRELILKNNIRQQNVVFEDIVFVMQIFLKASKVSFVNNYFYTNFQRMGSMSSSISVLHKSKLSLNTMETLLKREGIFNECQNLYKKFFLQFYYFISFKQIYIISWNISDKLVYRAYKEKLISVLDEIKGLSEFQDCYEYAKSFGFNEIQILPRIMLKIWNFSSRLYVNFSIFIYKFFIKN.

This sequence belongs to the glycosyltransferase 2 family.

The enzyme catalyses cholesterol + UDP-alpha-D-galactose = cholesteryl 3-beta-D-galactoside + UDP + H(+). The protein operates within glycolipid biosynthesis. Galactosyltransferase involved in the synthesis of cholesterol glycolipids, which are formed by the use of host-derived cholesterol and have been shown to be immunogenic, and possibly contribute to Lyme disease pathogenesis. Catalyzes the formation of cholesteryl beta-D-galactopyranoside (CGal) from cholesterol and UDP-alpha-D-galactose. Cannot use GDP-mannose. This is Cholesterol galactosyltransferase from Borreliella burgdorferi (strain ATCC 35210 / DSM 4680 / CIP 102532 / B31) (Borrelia burgdorferi).